Consider the following 83-residue polypeptide: Short neurotoxin VAN-10 (83 aa).

An N-terminal signal peptide occupies residues 1–21 (MKTLLLTLVVVTIVCLDLGYT). 4 disulfide bridges follow: C24–C45, C38–C62, C64–C75, and C76–C81.

This sequence belongs to the three-finger toxin family. Short-chain subfamily. Type I alpha-neurotoxin sub-subfamily. As to expression, expressed by the venom gland.

It localises to the secreted. Binds to muscle nicotinic acetylcholine receptor (nAChR) and inhibit acetylcholine from binding to the receptor, thereby impairing neuromuscular transmission. In Laticauda laticaudata (Blue-ringed sea krait), this protein is Short neurotoxin VAN-10.